The primary structure comprises 216 residues: DNA gyrase subunit B (216 aa).

Residues 140 to 216 (SELFLVEGDS…PDKLRYHKIV (77 aa)) form the Toprim domain.

The protein belongs to the type II topoisomerase GyrB family. Heterotetramer, composed of two GyrA and two GyrB chains. In the heterotetramer, GyrA contains the active site tyrosine that forms a transient covalent intermediate with DNA, while GyrB binds cofactors and catalyzes ATP hydrolysis.

It is found in the cytoplasm. It catalyses the reaction ATP-dependent breakage, passage and rejoining of double-stranded DNA.. Its function is as follows. A type II topoisomerase that negatively supercoils closed circular double-stranded (ds) DNA in an ATP-dependent manner to modulate DNA topology and maintain chromosomes in an underwound state. Negative supercoiling favors strand separation, and DNA replication, transcription, recombination and repair, all of which involve strand separation. Also able to catalyze the interconversion of other topological isomers of dsDNA rings, including catenanes and knotted rings. Type II topoisomerases break and join 2 DNA strands simultaneously in an ATP-dependent manner. This Acinetobacter sp. (strain SEIP 12.81) protein is DNA gyrase subunit B (gyrB).